The sequence spans 1106 residues: Carbamoyl phosphate synthase large chain (1106 aa).

The interval Met-1–Glu-402 is carboxyphosphate synthetic domain. Arg-129, Arg-169, Gly-175, Gly-176, Glu-208, Ile-210, Glu-215, Gly-241, Val-242, His-243, Gln-285, and Glu-299 together coordinate ATP. Residues Lys-133–Leu-328 form the ATP-grasp 1 domain. Residues Gln-285, Glu-299, and Asn-301 each coordinate Mg(2+). Mn(2+)-binding residues include Gln-285, Glu-299, and Asn-301. Residues Gln-403–Thr-550 form an oligomerization domain region. Positions Glu-551 to Gly-953 are carbamoyl phosphate synthetic domain. In terms of domain architecture, ATP-grasp 2 spans Ala-681–Thr-872. Arg-717, Lys-756, Leu-758, Glu-763, Gly-788, Ile-789, His-790, Ser-791, Gln-831, and Glu-843 together coordinate ATP. The Mg(2+) site is built by Gln-831, Glu-843, and Asn-845. The Mn(2+) site is built by Gln-831, Glu-843, and Asn-845. The MGS-like domain occupies Gly-954–Asp-1106. The interval Gly-954–Asp-1106 is allosteric domain.

Belongs to the CarB family. In terms of assembly, composed of two chains; the small (or glutamine) chain promotes the hydrolysis of glutamine to ammonia, which is used by the large (or ammonia) chain to synthesize carbamoyl phosphate. Tetramer of heterodimers (alpha,beta)4. Requires Mg(2+) as cofactor. Mn(2+) serves as cofactor.

It carries out the reaction hydrogencarbonate + L-glutamine + 2 ATP + H2O = carbamoyl phosphate + L-glutamate + 2 ADP + phosphate + 2 H(+). The catalysed reaction is hydrogencarbonate + NH4(+) + 2 ATP = carbamoyl phosphate + 2 ADP + phosphate + 2 H(+). Its pathway is amino-acid biosynthesis; L-arginine biosynthesis; carbamoyl phosphate from bicarbonate: step 1/1. It functions in the pathway pyrimidine metabolism; UMP biosynthesis via de novo pathway; (S)-dihydroorotate from bicarbonate: step 1/3. Its function is as follows. Large subunit of the glutamine-dependent carbamoyl phosphate synthetase (CPSase). CPSase catalyzes the formation of carbamoyl phosphate from the ammonia moiety of glutamine, carbonate, and phosphate donated by ATP, constituting the first step of 2 biosynthetic pathways, one leading to arginine and/or urea and the other to pyrimidine nucleotides. The large subunit (synthetase) binds the substrates ammonia (free or transferred from glutamine from the small subunit), hydrogencarbonate and ATP and carries out an ATP-coupled ligase reaction, activating hydrogencarbonate by forming carboxy phosphate which reacts with ammonia to form carbamoyl phosphate. This Kocuria rhizophila (strain ATCC 9341 / DSM 348 / NBRC 103217 / DC2201) protein is Carbamoyl phosphate synthase large chain.